A 699-amino-acid polypeptide reads, in one-letter code: Glycine--tRNA ligase beta subunit (699 aa).

It belongs to the class-II aminoacyl-tRNA synthetase family. In terms of assembly, tetramer of two alpha and two beta subunits.

The protein localises to the cytoplasm. The enzyme catalyses tRNA(Gly) + glycine + ATP = glycyl-tRNA(Gly) + AMP + diphosphate. In Methylobacterium radiotolerans (strain ATCC 27329 / DSM 1819 / JCM 2831 / NBRC 15690 / NCIMB 10815 / 0-1), this protein is Glycine--tRNA ligase beta subunit.